We begin with the raw amino-acid sequence, 81 residues long: MASKEEILAGLAEIVNEETGLDTAEVQPEKSFTDDLDIDSISMMTIVVNAEDKFGVKIPDEEVKNLKTVQDAVDFIDGAQA.

Residues 2–80 form the Carrier domain; sequence ASKEEILAGL…DAVDFIDGAQ (79 aa). Position 40 is an O-(pantetheine 4'-phosphoryl)serine (serine 40).

Belongs to the acyl carrier protein (ACP) family. Post-translationally, 4'-phosphopantetheine is transferred from CoA to a specific serine of apo-ACP by AcpS. This modification is essential for activity because fatty acids are bound in thioester linkage to the sulfhydryl of the prosthetic group.

Its subcellular location is the cytoplasm. It functions in the pathway lipid metabolism; fatty acid biosynthesis. In terms of biological role, carrier of the growing fatty acid chain in fatty acid biosynthesis. In Micrococcus luteus (strain ATCC 4698 / DSM 20030 / JCM 1464 / CCM 169 / CCUG 5858 / IAM 1056 / NBRC 3333 / NCIMB 9278 / NCTC 2665 / VKM Ac-2230) (Micrococcus lysodeikticus), this protein is Acyl carrier protein.